Here is a 116-residue protein sequence, read N- to C-terminus: Protein Rev (116 aa).

Ser5 is subject to Phosphoserine; by host CK2. The homomultimerization stretch occupies residues 18–26 (LIKILYQSN). A disordered region spans residues 23–49 (YQSNPPPSPEGTRQARRNRRRRWRARQ). The Nuclear localization signal and RNA-binding (RRE) signature appears at 34–50 (TRQARRNRRRRWRARQR). The segment covering 36 to 49 (QARRNRRRRWRARQ) has biased composition (basic residues). The short motif at 73–84 (LQLPPLERLNLN) is the Nuclear export signal and binding to XPO1 element. The segment at 86 to 116 (SEDCGTSGTQGVGSPQISVESPTVLESGTEE) is disordered. 2 positions are modified to phosphoserine; by host: Ser92 and Ser99.

Belongs to the HIV-1 REV protein family. Homomultimer; when bound to the RRE. Multimeric assembly is essential for activity and may involve XPO1. Binds to human KPNB1, XPO1, TNPO1, RANBP5 and IPO7. Interacts with the viral Integrase. Interacts with human KHDRBS1. Interacts with human NAP1; this interaction decreases Rev multimerization and stimulates its activity. Interacts with human DEAD-box helicases DDX3 and DDX24; these interactions may serve for viral RNA export to the cytoplasm and packaging, respectively. Interacts with human PSIP1; this interaction may inhibit HIV-1 DNA integration by promoting dissociation of the Integrase-LEDGF/p75 complex. Post-translationally, asymmetrically arginine dimethylated at one site by host PRMT6. Methylation impairs the RNA-binding activity and export of viral RNA from the nucleus to the cytoplasm. Phosphorylated by protein kinase CK2. Presence of, and maybe binding to the N-terminus of the regulatory beta subunit of CK2 is necessary for CK2-mediated Rev's phosphorylation.

It localises to the host nucleus. It is found in the host nucleolus. The protein resides in the host cytoplasm. Escorts unspliced or incompletely spliced viral pre-mRNAs (late transcripts) out of the nucleus of infected cells. These pre-mRNAs carry a recognition sequence called Rev responsive element (RRE) located in the env gene, that is not present in fully spliced viral mRNAs (early transcripts). This function is essential since most viral proteins are translated from unspliced or partially spliced pre-mRNAs which cannot exit the nucleus by the pathway used by fully processed cellular mRNAs. Rev itself is translated from a fully spliced mRNA that readily exits the nucleus. Rev's nuclear localization signal (NLS) binds directly to KPNB1/Importin beta-1 without previous binding to KPNA1/Importin alpha-1. KPNB1 binds to the GDP bound form of RAN (Ran-GDP) and targets Rev to the nucleus. In the nucleus, the conversion from Ran-GDP to Ran-GTP dissociates Rev from KPNB1 and allows Rev's binding to the RRE in viral pre-mRNAs. Rev multimerization on the RRE via cooperative assembly exposes its nuclear export signal (NES) to the surface. Rev can then form a complex with XPO1/CRM1 and Ran-GTP, leading to nuclear export of the complex. Conversion from Ran-GTP to Ran-GDP mediates dissociation of the Rev/RRE/XPO1/RAN complex, so that Rev can return to the nucleus for a subsequent round of export. Beside KPNB1, also seems to interact with TNPO1/Transportin-1, RANBP5/IPO5 and IPO7/RANBP7 for nuclear import. The nucleoporin-like HRB/RIP is an essential cofactor that probably indirectly interacts with Rev to release HIV RNAs from the perinuclear region to the cytoplasm. This Homo sapiens (Human) protein is Protein Rev.